A 523-amino-acid chain; its full sequence is Maltose/maltodextrin transport system permease protein MalF (523 aa).

Over 1-22 (MQSVQGTDAMTAPAASLPGSKK) the chain is Cytoplasmic. The helical transmembrane segment at 23–45 (VFIKWALLGTVGLINGYATILMY) threads the bilayer. At 46–49 (SRGE) the chain is on the periplasmic side. The chain crosses the membrane as a helical span at residues 50–69 (VAFAMLTVILTALALYVFGS). At 70–81 (KKTYAHRYIYPG) the chain is on the cytoplasmic side. A helical transmembrane segment spans residues 82–104 (IAGMILFILFPLAYTVGLAFTNY). At 105–288 (SAKNQLSLDR…DDGIKEPFIS (184 aa)) the chain is on the periplasmic side. The chain crosses the membrane as a helical span at residues 289–311 (IFIWTVVFSILTVLLTLMIGLVL). The ABC transmembrane type-1 domain occupies 290-514 (FIWTVVFSIL…LLVGALALLN (225 aa)). The Cytoplasmic segment spans residues 312-322 (ASVVQWEELKG). Residues 323-345 (RAIYRVLLILPYAVPAFISILIF) form a helical membrane-spanning segment. Residues 346 to 378 (KGLFNQSFGEINMVLNALFGISPSWFSDPIMAK) lie on the Periplasmic side of the membrane. The chain crosses the membrane as a helical span at residues 379–401 (SMVLIVNTWLGFPYMMILCMGLL). The Cytoplasmic portion of the chain corresponds to 402-434 (KAIPEDLYEASAIDGANFVQNFTRVTLPLMIKP). Residues 435-457 (LTPLLIASFAFNFNNFVMIQLLT) form a helical membrane-spanning segment. Residues 458-492 (QGGPNMIGTSEPAGYTDLLVSYTYRIAFEGGGGQD) are Periplasmic-facing. Residues 493-515 (FGLASAIATLIFLLVGALALLNL) form a helical membrane-spanning segment. The Cytoplasmic portion of the chain corresponds to 516-523 (RFTKLSQN).

It belongs to the binding-protein-dependent transport system permease family. MalFG subfamily. The complex is composed of two ATP-binding proteins (MalK), two transmembrane proteins (MalG and MalF) and a solute-binding protein (MalE).

The protein resides in the cell inner membrane. In terms of biological role, part of the ABC transporter complex MalEFGK involved in maltose/maltodextrin import. Probably responsible for the translocation of the substrate across the membrane. This chain is Maltose/maltodextrin transport system permease protein MalF (malF), found in Vibrio vulnificus (strain CMCP6).